The primary structure comprises 478 residues: Ribosomal RNA small subunit methyltransferase F (478 aa).

S-adenosyl-L-methionine is bound by residues 121-127, E145, D172, and D190; that span reads ASAPGSK. Catalysis depends on C243, which acts as the Nucleophile.

It belongs to the class I-like SAM-binding methyltransferase superfamily. RsmB/NOP family.

Its subcellular location is the cytoplasm. The catalysed reaction is cytidine(1407) in 16S rRNA + S-adenosyl-L-methionine = 5-methylcytidine(1407) in 16S rRNA + S-adenosyl-L-homocysteine + H(+). Functionally, specifically methylates the cytosine at position 1407 (m5C1407) of 16S rRNA. In Shewanella sediminis (strain HAW-EB3), this protein is Ribosomal RNA small subunit methyltransferase F.